The following is a 748-amino-acid chain: MSSDTSDSRPPNPDTKTASTSESENPAIPSPKPKSGAPLRNQDWWPNQIDVSRLHPHPPQGNPLGEDFDYAEEFAKLDVNALKADLTALMTQSQDWWPADYGHYGGLFIRMSWHSAGTYRIHDGRGGGGQGAQRFAPINSWPDNVSLDKARRLLWPIKQKYGNKISWADLLVFTGNVALESMGFKTFGFGFGREDIWEPEEILFGEEDEWLGTDKRYGGGEQRQLAEPYGATTMGLIYVNPEGPEGQPDPLAAAHDIRETFGRMAMNDEETAALIVGGHTFGKTHGAGDASLVGPEPEAAPIEQQGLGWKSSYGTGKGPDTITSGLEVVWTNTPTKWDNSFLEILYGYEWELTKSPAGAWQFTAKDGAGAGTIPDPFGGPGRNPTMLVTDISMRVDPIYGKITRRWLDHPEELSEAFAKAWYKLLHRDMGPISRYLGPWVAEPQLWQDPVPAVDHPLVDDQDIAALKSTVLDSGLSTGQLIKTAWASAASYRNTDKRGGANGARVRLEPQKNWDVNEPAELATVLPVLERIQQDFNASASGGKKVSLADLIVLAGSAAIEKAAKDGGYNVTVPFAPGRTDASQENTDVESFAVLEPRADGFRNYVRPGEKVQLEKMLLERAYFLGVTAPQLTALVGGLRALDVNHGGTKHGVFTDRPGALTNDFFVNLLDMGTEWKTSETTENVYEGVDRKTGQLKWTATANDLVFGSHSVLRAVAEVYAQSDNGERFVNDFVKAWVKVMNNDRFDLK.

The span at 1–24 (MSSDTSDSRPPNPDTKTASTSESE) shows a compositional bias: polar residues. The interval 1-43 (MSSDTSDSRPPNPDTKTASTSESENPAIPSPKPKSGAPLRNQD) is disordered. The segment at residues 113–238 (WHSAGTYRIH…YGATTMGLIY (126 aa)) is a cross-link (tryptophyl-tyrosyl-methioninium (Trp-Tyr) (with M-264)). The active-site Proton acceptor is the histidine 114. A cross-link (tryptophyl-tyrosyl-methioninium (Tyr-Met) (with W-113)) is located at residues 238 to 264 (YVNPEGPEGQPDPLAAAHDIRETFGRM). Residue histidine 279 coordinates heme b.

The protein belongs to the peroxidase family. Peroxidase/catalase subfamily. As to quaternary structure, homotetramer. The cofactor is heme b. Formation of the three residue Trp-Tyr-Met cross-link is important for the catalase, but not the peroxidase activity of the enzyme.

It catalyses the reaction H2O2 + AH2 = A + 2 H2O. It carries out the reaction 2 H2O2 = O2 + 2 H2O. Bifunctional enzyme with both catalase and broad-spectrum peroxidase activity. May play a role in the intracellular survival of mycobacteria. This chain is Catalase-peroxidase 2, found in Mycolicibacterium smegmatis (strain ATCC 700084 / mc(2)155) (Mycobacterium smegmatis).